The chain runs to 163 residues: C-type lectin lectoxin-Lio2 (163 aa).

Positions 1-21 (MERFIFAALLVVALSLSGTGA) are cleaved as a signal peptide. Intrachain disulfides connect Cys25-Cys36, Cys53-Cys152, and Cys127-Cys144. Residues 32-153 (SDGYCYKVFK…CRSKRYFICK (122 aa)) form the C-type lectin domain. Positions 117-119 (EPN) match the Mannose-binding motif. Positions 125 and 141 each coordinate Ca(2+).

The protein belongs to the true venom lectin family. As to expression, expressed by the venom gland.

The protein resides in the secreted. In terms of biological role, mannose-binding lectin which recognizes specific carbohydrate structures and agglutinates a variety of animal cells by binding to cell-surface glycoproteins and glycolipids. May be a calcium-dependent lectin. This chain is C-type lectin lectoxin-Lio2, found in Erythrolamprus poecilogyrus (Water snake).